The primary structure comprises 337 residues: DNA-directed RNA polymerase subunit alpha (337 aa).

The alpha N-terminal domain (alpha-NTD) stretch occupies residues 1–233 (MIQKNWQELI…DQLSLFVNFE (233 aa)). The alpha C-terminal domain (alpha-CTD) stretch occupies residues 249–337 (FNPALLKKVD…DLAKRYEDQY (89 aa)).

Belongs to the RNA polymerase alpha chain family. Homodimer. The RNAP catalytic core consists of 2 alpha, 1 beta, 1 beta' and 1 omega subunit. When a sigma factor is associated with the core the holoenzyme is formed, which can initiate transcription.

The catalysed reaction is RNA(n) + a ribonucleoside 5'-triphosphate = RNA(n+1) + diphosphate. In terms of biological role, DNA-dependent RNA polymerase catalyzes the transcription of DNA into RNA using the four ribonucleoside triphosphates as substrates. The chain is DNA-directed RNA polymerase subunit alpha from Bartonella quintana (strain Toulouse) (Rochalimaea quintana).